A 371-amino-acid polypeptide reads, in one-letter code: Aminomethyltransferase (371 aa).

The protein belongs to the GcvT family. As to quaternary structure, the glycine cleavage system is composed of four proteins: P, T, L and H.

It catalyses the reaction N(6)-[(R)-S(8)-aminomethyldihydrolipoyl]-L-lysyl-[protein] + (6S)-5,6,7,8-tetrahydrofolate = N(6)-[(R)-dihydrolipoyl]-L-lysyl-[protein] + (6R)-5,10-methylene-5,6,7,8-tetrahydrofolate + NH4(+). Functionally, the glycine cleavage system catalyzes the degradation of glycine. The polypeptide is Aminomethyltransferase (Cellvibrio japonicus (strain Ueda107) (Pseudomonas fluorescens subsp. cellulosa)).